A 1029-amino-acid chain; its full sequence is Translation initiation factor IF-2 (1029 aa).

The tract at residues 73 to 441 (RELRSEEDDG…RQRRRERKRE (369 aa)) is disordered. 2 stretches are compositionally biased toward acidic residues: residues 106 to 121 (TAEE…DEEE) and 148 to 177 (AEAE…DEAE). The segment covering 183–196 (AADKDAAAIADEQK) has biased composition (basic and acidic residues). Composition is skewed to acidic residues over residues 213–234 (TGEE…DAEA), 242–258 (TEAE…AEDV), and 279–322 (APDE…DEEG). A compositionally biased stretch (basic and acidic residues) spans 358–372 (KDKDKDKSSKKDKKD). The segment covering 373–386 (KSNKKSKSKGKKQK) has biased composition (basic residues). Residues 400 to 411 (QTLQETLQELEQ) are compositionally biased toward low complexity. Residues 417-427 (RQRRRRRRRKR) are compositionally biased toward basic residues. Positions 428 to 441 (HEEERQRRRERKRE) are enriched in basic and acidic residues. A tr-type G domain is found at 524–696 (PRAPVVTVMG…LLQSEIMELK (173 aa)). The interval 533–540 (GHVDHGKT) is G1. 533 to 540 (GHVDHGKT) provides a ligand contact to GTP. Residues 558–562 (GITQH) are G2. The G3 stretch occupies residues 582–585 (DTPG). GTP is bound by residues 582–586 (DTPGH) and 636–639 (NKMD). Positions 636–639 (NKMD) are G4. The G5 stretch occupies residues 672–674 (SAK).

The protein belongs to the TRAFAC class translation factor GTPase superfamily. Classic translation factor GTPase family. IF-2 subfamily.

The protein localises to the cytoplasm. One of the essential components for the initiation of protein synthesis. Protects formylmethionyl-tRNA from spontaneous hydrolysis and promotes its binding to the 30S ribosomal subunits. Also involved in the hydrolysis of GTP during the formation of the 70S ribosomal complex. The sequence is that of Translation initiation factor IF-2 from Salinibacter ruber (strain DSM 13855 / M31).